Reading from the N-terminus, the 758-residue chain is 5-methyltetrahydropteroyltriglutamate--homocysteine methyltransferase (758 aa).

Residues 16-19 and lysine 112 each bind 5-methyltetrahydropteroyltri-L-glutamate; that span reads RELK. L-homocysteine is bound by residues 433–435 and glutamate 486; that span reads IGS. Residues 433–435 and glutamate 486 each bind L-methionine; that span reads IGS. 5-methyltetrahydropteroyltri-L-glutamate is bound by residues 517–518 and tryptophan 563; that span reads RC. Aspartate 601 is a binding site for L-homocysteine. Aspartate 601 contacts L-methionine. Glutamate 607 is a 5-methyltetrahydropteroyltri-L-glutamate binding site. Residues histidine 643, cysteine 645, and glutamate 667 each coordinate Zn(2+). The active-site Proton donor is histidine 696. A Zn(2+)-binding site is contributed by cysteine 728.

It belongs to the vitamin-B12 independent methionine synthase family. Zn(2+) is required as a cofactor.

The enzyme catalyses 5-methyltetrahydropteroyltri-L-glutamate + L-homocysteine = tetrahydropteroyltri-L-glutamate + L-methionine. It participates in amino-acid biosynthesis; L-methionine biosynthesis via de novo pathway; L-methionine from L-homocysteine (MetE route): step 1/1. Functionally, catalyzes the transfer of a methyl group from 5-methyltetrahydrofolate to homocysteine resulting in methionine formation. This is 5-methyltetrahydropteroyltriglutamate--homocysteine methyltransferase from Neisseria meningitidis serogroup C (strain 053442).